A 148-amino-acid chain; its full sequence is Snaclec 8 (148 aa).

The first 23 residues, 1-23, serve as a signal peptide directing secretion; it reads MGRFIFVSFSLLVVFFSLSGTEA. The region spanning 34–148 is the C-type lectin domain; that stretch reads YDQNCYKAFE…DTQFRLQEPG (115 aa).

Belongs to the snaclec family. In terms of assembly, heterodimer; disulfide-linked. Contains disulfide bonds. Expressed by the venom gland.

The protein localises to the secreted. Interferes with one step of hemostasis (modulation of platelet aggregation, or coagulation cascade, for example). This is Snaclec 8 from Echis carinatus sochureki (Saw-scaled viper).